Consider the following 170-residue polypeptide: MKTQRDGHSLGGWSLMLLLLGLLMPLAIVAQVLSYKEAVLRAIDGINQRSSDANLYRLLDLDPRPTMDGDPDTPKPVSFTVKETVCPRTTQQSPEDCDFKKDGLVKRCVGTVTLNQARDSFDISCDKDNRRFASLGNFFRKARKKIGEEFKRIVQRIKDFLQHLIPRTEA.

The N-terminal stretch at 1–30 (MKTQRDGHSLGGWSLMLLLLGLLMPLAIVA) is a signal peptide. Positions 31–131 (QVLSYKEAVL…DISCDKDNRR (101 aa)) are cleaved as a propeptide — cathelin-like domain (CLD). Intrachain disulfides connect cysteine 86-cysteine 97 and cysteine 108-cysteine 125. Residues 150–162 (FKRIVQRIKDFLQ) form an active core region.

Belongs to the cathelicidin family. In terms of assembly, monomer, homodimer or homotrimer (in vitro). Oligomerizes as tetra- or hexamer in solution (in vitro). Post-translationally, proteolytically cleaved by proteinase PRTN3 into antibacterial peptide LL-37. Proteolytically cleaved by cathepsin CTSG and neutrophil elastase ELANE. In terms of processing, resistant to proteolytic degradation in solution, and when bound to both zwitterionic (mimicking mammalian membranes) and negatively charged membranes (mimicking bacterial membranes). After secretion onto the skin surface, the CAMP gene product is processed by a serine protease-dependent mechanism into multiple novel antimicrobial peptides distinct from and shorter than cathelicidin LL-37. These peptides show enhanced antimicrobial action, acquiring the ability to kill skin pathogens such as S.aureus, E.coli and C.albicans. These peptides have lost the ability to stimulate CXCL8/IL8 release from keratinocytes. The peptides act synergistically, killing bacteria at lower concentrations when present together, and maintain activity at increased salt condition.

It is found in the secreted. The protein resides in the vesicle. Antimicrobial protein that is an integral component of the innate immune system. Binds to bacterial lipopolysaccharides (LPS). Acts via neutrophil N-formyl peptide receptors to enhance the release of CXCL2. Postsecretory processing generates multiple cathelicidin antimicrobial peptides with various lengths which act as a topical antimicrobial defense in sweat on skin. The unprocessed precursor form, cathelicidin antimicrobial peptide, inhibits the growth of Gram-negative E.coli and E.aerogenes with efficiencies comparable to that of the mature peptide LL-37 (in vitro). Its function is as follows. Antimicrobial peptide that is an integral component of the innate immune system. Binds to bacterial lipopolysaccharides (LPS). Causes membrane permeabilization by forming transmembrane pores (in vitro). Causes lysis of E.coli. Exhibits antimicrobial activity against Gram-negative bacteria such as P.aeruginosa, S.typhimurium, E.aerogenes, E.coli and P.syringae, Gram-positive bacteria such as L.monocytogenes, S.epidermidis, S.pyogenes and S.aureus, as well as vancomycin-resistant enterococci (in vitro). Exhibits antimicrobial activity against methicillin-resistant S.aureus, P.mirabilis, and C.albicans in low-salt media, but not in media containing 100 mM NaCl (in vitro). Forms chiral supramolecular assemblies with quinolone signal (PQS) molecules of P.aeruginosa, which may lead to interference of bacterial quorum signaling and perturbance of bacterial biofilm formation. May form supramolecular fiber-like assemblies on bacterial membranes. Induces cytokine and chemokine producation as well as TNF/TNFA and CSF2/GMCSF production in normal human keratinocytes. Exhibits hemolytic activity against red blood cells. In terms of biological role, exhibits antimicrobial activity against E.coli and B.megaterium (in vitro). This Hylobates moloch (Silvery gibbon) protein is Cathelicidin antimicrobial peptide.